Reading from the N-terminus, the 510-residue chain is NAD(P)H-quinone oxidoreductase subunit 2 A, chloroplastic (510 aa).

13 consecutive transmembrane segments (helical) span residues 31-51 (FIFPECILIFGLILLLMIDLT), 57-77 (TPWLYFISSTSLVMSITALLF), 99-119 (IFQFLILLCSTLCIPLSVEYI), 124-144 (MAITEFLLFVLTATLGGMFLC), 149-169 (LITIFVAPECFSLCSYLLSGY), 183-203 (YLLMGGASSSILVYGFSWLYG), 229-249 (ISIALISITVGIGFKLSPAPF), 295-315 (WHLLLEILAILSMILGNLIAI), 323-343 (MLAYSSIGQIGYVIIGIIVGD), 354-374 (YMLFYIAMNLGTFACIVLFGL), 395-415 (ALSSALCLLSLGGIPPLAGFF), 418-438 (LYLFWCGWQAGLYFLVSIGLL), and 484-504 (MIVCVIASTIPGISMNPIIAI).

The protein belongs to the complex I subunit 2 family. NDH is composed of at least 16 different subunits, 5 of which are encoded in the nucleus.

The protein resides in the plastid. Its subcellular location is the chloroplast thylakoid membrane. The enzyme catalyses a plastoquinone + NADH + (n+1) H(+)(in) = a plastoquinol + NAD(+) + n H(+)(out). It carries out the reaction a plastoquinone + NADPH + (n+1) H(+)(in) = a plastoquinol + NADP(+) + n H(+)(out). In terms of biological role, NDH shuttles electrons from NAD(P)H:plastoquinone, via FMN and iron-sulfur (Fe-S) centers, to quinones in the photosynthetic chain and possibly in a chloroplast respiratory chain. The immediate electron acceptor for the enzyme in this species is believed to be plastoquinone. Couples the redox reaction to proton translocation, and thus conserves the redox energy in a proton gradient. The sequence is that of NAD(P)H-quinone oxidoreductase subunit 2 A, chloroplastic from Nymphaea alba (White water-lily).